The sequence spans 433 residues: Enolase (433 aa).

A (2R)-2-phosphoglycerate-binding site is contributed by Gln-167. The Proton donor role is filled by Glu-209. Mg(2+)-binding residues include Asp-246, Glu-291, and Asp-318. The (2R)-2-phosphoglycerate site is built by Lys-343, Arg-372, Ser-373, and Lys-394. Lys-343 (proton acceptor) is an active-site residue.

The protein belongs to the enolase family. Component of the RNA degradosome, a multiprotein complex involved in RNA processing and mRNA degradation. Mg(2+) is required as a cofactor.

It localises to the cytoplasm. It is found in the secreted. Its subcellular location is the cell surface. It carries out the reaction (2R)-2-phosphoglycerate = phosphoenolpyruvate + H2O. It participates in carbohydrate degradation; glycolysis; pyruvate from D-glyceraldehyde 3-phosphate: step 4/5. Functionally, catalyzes the reversible conversion of 2-phosphoglycerate (2-PG) into phosphoenolpyruvate (PEP). It is essential for the degradation of carbohydrates via glycolysis. The protein is Enolase of Photorhabdus laumondii subsp. laumondii (strain DSM 15139 / CIP 105565 / TT01) (Photorhabdus luminescens subsp. laumondii).